The following is a 345-amino-acid chain: MGRSPCCDKAGLKKGPWTPEEDQKLLAYIEEHGHGSWRSLPEKAGLQRCGKSCRLRWTNYLRPDIKRGKFTVQEEQTIIQLHALLGNRWSAIATHLPKRTDNEIKNYWNTHLKKRLIKMGIDPVTHKHKNETLSSSTGQSKNAATLSHMAQWESARLEAEARLARESKLLHLQHYQNNNNLNKSAAPQQHCFTQKTSTNWTKPNQGNGDQQLESPTSTVTFSENLLMPLGIPTDSSRNRNNNNNESSAMIELAVSSSTSSDVSLVKEHEHDWIRQINCGSGGIGEGFTSLLIGDSVGRGLPTGKNEATAGVGNESEYNYYEDNKNYWNSILNLVDSSPSDSATMF.

2 HTH myb-type domains span residues 9–61 and 62–116; these read KAGL…TNYL and RPDI…KKRL. 2 DNA-binding regions (H-T-H motif) span residues 37-61 and 89-112; these read WRSL…TNYL and WSAI…NTHL.

In terms of tissue distribution, expressed in trichomes, stems, carpels, petals and stamens.

The protein resides in the nucleus. In terms of biological role, functions as a repressor of epidermal cell outgrowth and negatively regulate trichome branch formation. Acts both as a positive and a negative regulator of cellular outgrowth. Promotes both trichome expansion and branch formation. Coordinately with WIN1/SHN1, participates in the regulation of cuticle biosynthesis and wax accumulation in reproductive organs and trichomes. Functions in cuticle nanoridge formation in petals and stamens, and in morphogenesis of petal conical cells and trichomes. May play a role in the regulation of cuticle formation in vegetative organs. This is Transcription factor MYB106 from Arabidopsis thaliana (Mouse-ear cress).